A 456-amino-acid chain; its full sequence is Alcohol acyltransferase 1 (456 aa).

Catalysis depends on proton acceptor residues His166 and Asp382.

The protein belongs to the plant acyltransferase family. As to expression, expressed in fruit.

The catalysed reaction is 3-(methylsulfanyl)propanoyl-CoA + butan-1-ol = butyl 3-(methylsulfanyl)propanoate + CoA. It catalyses the reaction ethanol + benzoyl-CoA = ethyl benzoate + CoA. It carries out the reaction butan-1-ol + benzoyl-CoA = butyl benzoate + CoA. The enzyme catalyses 2-(methylsulfanyl)acetyl-CoA + butan-1-ol = butyl 2-(methylsulfanyl)acetate + CoA. Its function is as follows. Involved in the biosynthesis of volatile esters which confer kiwifruit flavor. Alcohol acyl transferase that can use a wide range of alcohols as substrate to produce esters. Exhibits benzoyl-CoA:alcohol O-acyltransferase activity. The sequence is that of Alcohol acyltransferase 1 from Actinidia deliciosa (Kiwi).